The primary structure comprises 288 residues: Oxaloacetate decarboxylase (288 aa).

Ser-47 serves as a coordination point for substrate. Asp-85 is a binding site for Mg(2+). Substrate-binding residues include Arg-156 and His-232.

The protein belongs to the isocitrate lyase/PEP mutase superfamily. Oxaloacetate decarboxylase family. As to quaternary structure, homotetramer; dimer of dimers. Mg(2+) serves as cofactor.

It catalyses the reaction oxaloacetate + H(+) = pyruvate + CO2. Catalyzes the decarboxylation of oxaloacetate into pyruvate. Seems to play a role in maintaining cellular concentrations of bicarbonate and pyruvate. The chain is Oxaloacetate decarboxylase from Bradyrhizobium diazoefficiens (strain JCM 10833 / BCRC 13528 / IAM 13628 / NBRC 14792 / USDA 110).